Here is a 248-residue protein sequence, read N- to C-terminus: Proteasome subunit alpha (248 aa).

Position 2 is an N-acetylserine; partial (Ser-2).

The protein belongs to the peptidase T1A family. In terms of assembly, the 20S proteasome core is composed of 14 alpha and 14 beta subunits that assemble into four stacked heptameric rings, resulting in a barrel-shaped structure. The two inner rings, each composed of seven catalytic beta subunits, are sandwiched by two outer rings, each composed of seven alpha subunits. The catalytic chamber with the active sites is on the inside of the barrel. Has a gated structure, the ends of the cylinder being occluded by the N-termini of the alpha-subunits. Is capped by the proteasome-associated ATPase, ARC.

The protein localises to the cytoplasm. It functions in the pathway protein degradation; proteasomal Pup-dependent pathway. Its activity is regulated as follows. The formation of the proteasomal ATPase ARC-20S proteasome complex, likely via the docking of the C-termini of ARC into the intersubunit pockets in the alpha-rings, may trigger opening of the gate for substrate entry. Interconversion between the open-gate and close-gate conformations leads to a dynamic regulation of the 20S proteasome proteolysis activity. Its function is as follows. Component of the proteasome core, a large protease complex with broad specificity involved in protein degradation. The chain is Proteasome subunit alpha from Mycobacterium tuberculosis (strain CDC 1551 / Oshkosh).